Reading from the N-terminus, the 740-residue chain is Catalase-peroxidase (740 aa).

Positions 107–229 (WHAAGTYRIH…LAAVQMGLIY (123 aa)) form a cross-link, tryptophyl-tyrosyl-methioninium (Trp-Tyr) (with M-255). His-108 (proton acceptor) is an active-site residue. Residues 229-255 (YVNPEGPNGNPDPMAAAVDIRETFRRM) constitute a cross-link (tryptophyl-tyrosyl-methioninium (Tyr-Met) (with W-107)). His-270 is a heme b binding site.

Belongs to the peroxidase family. Peroxidase/catalase subfamily. In terms of assembly, homodimer. The cofactor is heme b. Post-translationally, formation of the three residue Trp-Tyr-Met cross-link is important for the catalase, but not the peroxidase activity of the enzyme.

The catalysed reaction is H2O2 + AH2 = A + 2 H2O. The enzyme catalyses 2 H2O2 = O2 + 2 H2O. Its function is as follows. Bifunctional enzyme with both catalase and broad-spectrum peroxidase activity. May play a role in the intracellular survival of mycobacteria. This chain is Catalase-peroxidase, found in Mycobacterium bovis (strain ATCC BAA-935 / AF2122/97).